The primary structure comprises 293 residues: Phosphatidate cytidylyltransferase (293 aa).

8 consecutive transmembrane segments (helical) span residues 6–26 (IISA…GGWY), 51–71 (IAPA…SATV), 73–93 (PHLT…YLLF), 97–117 (MATI…GYLP), 157–177 (LLVT…AYIM), 195–215 (VEGS…GAWY), 218–238 (WPYW…VSLL), and 273–293 (VFTA…LNNL).

The protein belongs to the CDS family.

It localises to the cell membrane. It catalyses the reaction a 1,2-diacyl-sn-glycero-3-phosphate + CTP + H(+) = a CDP-1,2-diacyl-sn-glycerol + diphosphate. Its pathway is phospholipid metabolism; CDP-diacylglycerol biosynthesis; CDP-diacylglycerol from sn-glycerol 3-phosphate: step 3/3. In Synechocystis sp. (strain ATCC 27184 / PCC 6803 / Kazusa), this protein is Phosphatidate cytidylyltransferase (cdsA).